We begin with the raw amino-acid sequence, 328 residues long: GATA transcription factor 17 (328 aa).

Residues 1–68 (MSGHHEAKPY…EEYEGGEGVP (68 aa)) are disordered. Residues 14 to 29 (RGPAPADEEAAPAAAA) show a composition bias toward low complexity. Acidic residues-rich tracts occupy residues 30 to 39 (DEAEAEAEVE) and 47 to 63 (EQEYEEGEEGEEEEYEG). Positions 100–135 (PHVASNTLTLSFQGEVYVFESVSAERVQAVLLLLGG) constitute a Tify domain. The region spanning 161–203 (RMASLMRFREKRKERNFDKKIRYTVRKEVALRMQRNRGQFTSS) is the CCT domain. Residues 198–231 (GQFTSSKSKAEEATSVITSSEGSPNWGAVEGRPP) are disordered. The GATA-type zinc-finger motif lies at 236-263 (CHHCGISAASTPMMRRGPDGPRTLCNAC).

This sequence belongs to the type IV zinc-finger family. Class C subfamily.

It is found in the nucleus. In terms of biological role, transcriptional activator that specifically binds 5'-GATA-3' or 5'-GAT-3' motifs within gene promoters. This chain is GATA transcription factor 17, found in Oryza sativa subsp. japonica (Rice).